We begin with the raw amino-acid sequence, 586 residues long: Dolichyl-diphosphooligosaccharide--protein glycosyltransferase subunit 1 (586 aa).

An N-terminal signal peptide occupies residues 1–15; it reads MRLLFAIALLGAVFA. Topologically, residues 16–421 are lumenal; it reads EDAWKAANVD…EFEFVDMLRE (406 aa). A helical transmembrane segment spans residues 422 to 442; it reads PLLASAFFFSLFFVIIVYSRF. The Cytoplasmic segment spans residues 443 to 586; that stretch reads DFTISSDPAK…NRADSVLASI (144 aa).

The protein belongs to the OST1 family. As to quaternary structure, component of the oligosaccharyltransferase (OST) complex.

Its subcellular location is the endoplasmic reticulum membrane. The protein localises to the cytoplasmic granule. The protein operates within protein modification; protein glycosylation. In terms of biological role, subunit of the oligosaccharyl transferase (OST) complex that catalyzes the initial transfer of a defined glycan (Glc(3)Man(9)GlcNAc(2) in eukaryotes) from the lipid carrier dolichol-pyrophosphate to an asparagine residue within an Asn-X-Ser/Thr consensus motif in nascent polypeptide chains, the first step in protein N-glycosylation. N-glycosylation occurs cotranslationally and the complex associates with the Sec61 complex at the channel-forming translocon complex that mediates protein translocation across the endoplasmic reticulum (ER). All subunits are required for a maximal enzyme activity. This is Dolichyl-diphosphooligosaccharide--protein glycosyltransferase subunit 1 from Caenorhabditis elegans.